A 160-amino-acid polypeptide reads, in one-letter code: Lymphocyte antigen 96 (160 aa).

The signal sequence occupies residues 1–16 (MLPFILFSTLLPLIFT). 3 disulfides stabilise this stretch: Cys25/Cys51, Cys37/Cys148, and Cys95/Cys105. Residues Asn26, Asn77, and Asn101 are each glycosylated (N-linked (GlcNAc...) asparagine). Positions 119 to 123 (FSFKG) are interaction with lipopolysaccharide. N-linked (GlcNAc...) asparagine glycosylation occurs at Asn150.

In terms of assembly, heterogeneous homomer formed from homodimers; disulfide-linked. Belongs to the lipopolysaccharide (LPS) receptor, a multi-protein complex containing at least CD14, LY96 and TLR4. Binds to the extracellular domains of TLR2 and TLR4. Ligand binding induces interaction with TLR4 and oligomerization of the complex. Post-translationally, N-glycosylated.

It is found in the secreted. The protein resides in the extracellular space. Its function is as follows. Binds bacterial lipopolysaccharide (LPS). Cooperates with TLR4 in the innate immune response to bacterial lipopolysaccharide (LPS), and with TLR2 in the response to cell wall components from Gram-positive and Gram-negative bacteria. Enhances TLR4-dependent activation of NF-kappa-B. Cells expressing both LY96 and TLR4, but not TLR4 alone, respond to LPS. In Cricetulus griseus (Chinese hamster), this protein is Lymphocyte antigen 96 (LY96).